Consider the following 187-residue polypeptide: Probable nicotinate-nucleotide adenylyltransferase (187 aa).

It belongs to the NadD family.

It catalyses the reaction nicotinate beta-D-ribonucleotide + ATP + H(+) = deamido-NAD(+) + diphosphate. It participates in cofactor biosynthesis; NAD(+) biosynthesis; deamido-NAD(+) from nicotinate D-ribonucleotide: step 1/1. Catalyzes the reversible adenylation of nicotinate mononucleotide (NaMN) to nicotinic acid adenine dinucleotide (NaAD). In Anaeromyxobacter dehalogenans (strain 2CP-C), this protein is Probable nicotinate-nucleotide adenylyltransferase.